The sequence spans 849 residues: MDIREEFLRFFESKNHDRVESAPLVPDDATLLFNNAGMVPFKSIFTGEVPSPANPRAVSCQTCIRAGGKHNDLENVGYTARHHTFFEMLGNFSFGNYFKEEAIDYAWEFITGVLKFPKEKLWVTVHESDDEAEALWLRHVSIDRIMRLGDKDNFWQMGDTGPCGPCSEIFFDQGAEKFSGPEDYMGGDGDRFLEIWNLVFMQYERSSDGTLTSLPKPSIDTGMGLERVVAISEGVSSNYSSSLFMPIIKKVETLIEKEYVYATGASYRVIADHIRTSLFLLAQGVNFSNEGRGYVLRRILRRAVRHGYLLGFSEPFMFKLVDTVVEIMGGEYDYLAQKSHSVKEQIELEEARFFKTIASGIELFNAELHNTKDIFSGSVAFKLYDTFGFPLDLTEDMLREKNLKLDSAKFEELMQEQRSRAKAAWKGSGDEAVHGDFKELLEKFSENSFVGYESTKQKSRVLALLDESYHHADKLSAGVNGWVFLDTTPFYAQSGGQCGDIGELNGFAKVLDTKKFFGLNLSQISTEKELKVGDEVEAVVDISRGEITKHHSATHLLHAVLFDVLGDHISQAGSLVEASRLRFDFSHPKAISNEELAEIERRVNYEIMRGIRANTEVMSIDEAKKSGAKAQFGEKYGDEVRVVSFGDASIEFCGGVHVENSANIGSFIITKESGVSAGVRRIEAVCGNAAFNYFSEQRELLREVEHEVKNLDILAGVARLKSNIVELKKELHDAESCIKTDIKIQSINGISVVVDELTSGDIKEKIDELKNQHESLCAILFQVKDDKVMMAAGVKGSDAKAGDWIKHIAPLLGGGGGGRADFAQAGGKDISKLSEAKIEALRYITEVIS.

The Zn(2+) site is built by His-551, His-555, Cys-653, and His-657.

It belongs to the class-II aminoacyl-tRNA synthetase family. Zn(2+) serves as cofactor.

It is found in the cytoplasm. The catalysed reaction is tRNA(Ala) + L-alanine + ATP = L-alanyl-tRNA(Ala) + AMP + diphosphate. Functionally, catalyzes the attachment of alanine to tRNA(Ala) in a two-step reaction: alanine is first activated by ATP to form Ala-AMP and then transferred to the acceptor end of tRNA(Ala). Also edits incorrectly charged Ser-tRNA(Ala) and Gly-tRNA(Ala) via its editing domain. The sequence is that of Alanine--tRNA ligase from Sulfurimonas denitrificans (strain ATCC 33889 / DSM 1251) (Thiomicrospira denitrificans (strain ATCC 33889 / DSM 1251)).